The primary structure comprises 178 residues: Large ribosomal subunit protein uL16 (178 aa).

It belongs to the universal ribosomal protein uL16 family.

This Pyrobaculum calidifontis (strain DSM 21063 / JCM 11548 / VA1) protein is Large ribosomal subunit protein uL16.